Here is a 356-residue protein sequence, read N- to C-terminus: Chorismate synthase (356 aa).

Arg48 and Arg54 together coordinate NADP(+). Residues 125–127 (RSS), 237–238 (NA), Gly281, 296–300 (KPTSS), and Arg322 each bind FMN.

Belongs to the chorismate synthase family. Homotetramer. FMNH2 serves as cofactor.

The catalysed reaction is 5-O-(1-carboxyvinyl)-3-phosphoshikimate = chorismate + phosphate. It functions in the pathway metabolic intermediate biosynthesis; chorismate biosynthesis; chorismate from D-erythrose 4-phosphate and phosphoenolpyruvate: step 7/7. Its function is as follows. Catalyzes the anti-1,4-elimination of the C-3 phosphate and the C-6 proR hydrogen from 5-enolpyruvylshikimate-3-phosphate (EPSP) to yield chorismate, which is the branch point compound that serves as the starting substrate for the three terminal pathways of aromatic amino acid biosynthesis. This reaction introduces a second double bond into the aromatic ring system. The chain is Chorismate synthase from Novosphingobium aromaticivorans (strain ATCC 700278 / DSM 12444 / CCUG 56034 / CIP 105152 / NBRC 16084 / F199).